We begin with the raw amino-acid sequence, 479 residues long: GTPase Obg (479 aa).

Residues 2–159 (TTFVDRVELH…QDIVLELKTV (158 aa)) form the Obg domain. Residues 61 to 87 (HHKPHRSATNGKPGEGGNRSGKDGQDL) are disordered. The OBG-type G domain maps to 160 to 331 (ADVALVGYPS…LSFALAELVG (172 aa)). Residues 166–173 (GYPSAGKS), 191–195 (FTTLV), 212–215 (DVPG), 283–286 (NKID), and 312–314 (SAV) each bind GTP. Residues serine 173 and threonine 193 each coordinate Mg(2+). The region spanning 349–431 (PKAVDDAGFT…DNAVVFDWEP (83 aa)) is the OCT domain. Residues 440 to 453 (LGRRGEDHRLDEPR) show a composition bias toward basic and acidic residues. Positions 440–479 (LGRRGEDHRLDEPRPAAQRRRDKQAERDDAEKEYDDFEPF) are disordered. Over residues 470–479 (EKEYDDFEPF) the composition is skewed to acidic residues.

This sequence belongs to the TRAFAC class OBG-HflX-like GTPase superfamily. OBG GTPase family. As to quaternary structure, monomer. Mg(2+) serves as cofactor.

The protein localises to the cytoplasm. In terms of biological role, an essential GTPase which binds GTP, GDP and possibly (p)ppGpp with moderate affinity, with high nucleotide exchange rates and a fairly low GTP hydrolysis rate. Plays a role in control of the cell cycle, stress response, ribosome biogenesis and in those bacteria that undergo differentiation, in morphogenesis control. The protein is GTPase Obg of Streptomyces avermitilis (strain ATCC 31267 / DSM 46492 / JCM 5070 / NBRC 14893 / NCIMB 12804 / NRRL 8165 / MA-4680).